The chain runs to 77 residues: Large ribosomal subunit protein bL28 (77 aa).

It belongs to the bacterial ribosomal protein bL28 family.

The protein is Large ribosomal subunit protein bL28 of Verminephrobacter eiseniae (strain EF01-2).